Consider the following 416-residue polypeptide: 3-hydroxy-3-methylglutaryl coenzyme A reductase AN1593 (416 aa).

E103 (charge relay system) is an active-site residue. A glycan (N-linked (GlcNAc...) asparagine) is linked at N167. The Charge relay system role is filled by K236. N-linked (GlcNAc...) asparagine glycosylation is present at N277. The Charge relay system role is filled by D312. Residues 380–400 (LALLVAAGVLAGELSLCSALS) form a helical membrane-spanning segment. Residue H408 is the Proton donor of the active site.

The protein belongs to the HMG-CoA reductase family.

Its subcellular location is the membrane. The catalysed reaction is (R)-mevalonate + 2 NADP(+) + CoA = (3S)-3-hydroxy-3-methylglutaryl-CoA + 2 NADPH + 2 H(+). It participates in metabolic intermediate biosynthesis; (R)-mevalonate biosynthesis; (R)-mevalonate from acetyl-CoA: step 3/3. 3-hydroxy-3-methylglutaryl coenzyme A reductase; part of the gene cluster that mediates the biosynthesis of the diterpene ent-pimara-8(14),15-diene (PD). Within the cluster, the HMG-CoA reductase AN1593 functions in the mevalonate pathway, which produces isoprenoid precursors. The geranylgeranyl pyrophosphate (GGPP) synthase AN1592 is needed in the formation of GGPP, the precursor for diterpenes. Lastly, the pimaradiene synthase pbcA performs the 2 cyclization steps that convert GGPP to ent-pimara-8(14),15-diene. The putative roles of the remaining cluster enzymes in ent-pimara-8(14),15-diene biosynthesis is unclear. The cytochrome P450 monooxygenase AN1598, the glutathione S-transferase AN1595, the oxidoreductases AN1596 and AN1597 probably function as decorative enzymes. It is possible that in biological conditions the compound is oxidized to ent-pimara-8(14),15-dien-19-oic acid, which is a bioactive diterpene compound predominant in many plant extracts. The polypeptide is 3-hydroxy-3-methylglutaryl coenzyme A reductase AN1593 (Emericella nidulans (strain FGSC A4 / ATCC 38163 / CBS 112.46 / NRRL 194 / M139) (Aspergillus nidulans)).